The chain runs to 138 residues: Large ribosomal subunit protein uL16 (138 aa).

Residues 1–16 show a composition bias toward basic residues; it reads MLIPRRVKHRKQHHPS. The tract at residues 1–25 is disordered; the sequence is MLIPRRVKHRKQHHPSRSGAAKGGT.

It belongs to the universal ribosomal protein uL16 family. As to quaternary structure, part of the 50S ribosomal subunit.

Functionally, binds 23S rRNA and is also seen to make contacts with the A and possibly P site tRNAs. In Rhodococcus erythropolis (strain PR4 / NBRC 100887), this protein is Large ribosomal subunit protein uL16.